A 681-amino-acid polypeptide reads, in one-letter code: Pentatricopeptide repeat-containing protein At2g22410, mitochondrial (681 aa).

The N-terminal 32 residues, 1 to 32 (MNISKAKLLLLPPPLTPKLNRSLYSHSQRRTR), are a transit peptide targeting the mitochondrion. 13 PPR repeats span residues 117-151 (NIFS…GCCE), 155-189 (DHFT…RLEL), 190-220 (VSHV…SPVR), 221-255 (DLVS…GVKP), 256-290 (DDVT…GLRM), 291-321 (TIPL…LEKR), 322-356 (TIVS…DVVL), 357-387 (WNAM…NTKP), 388-422 (DEIT…SLSL), 423-453 (NVAL…IQTR), 454-488 (NSLT…GIAP), 489-519 (DEIT…MKSR), and 525-555 (QLKH…MPME). Residues 560–635 (VWGALLFGCR…IPGCSSIEVN (76 aa)) form a type E motif region. The type E(+) motif stretch occupies residues 636 to 666 (GIVCEFIVRDKSRPESEKIYDRLHCLGRHMR).

It belongs to the PPR family. PCMP-E subfamily.

It is found in the mitochondrion. The polypeptide is Pentatricopeptide repeat-containing protein At2g22410, mitochondrial (PCMP-E28) (Arabidopsis thaliana (Mouse-ear cress)).